Reading from the N-terminus, the 225-residue chain is MPSTKFKGYFITIEGGEGSGKSTLLNQLGDYFRNKGFEVIQTREPGGTKLGESIRHLLLNHEDSISIGHQAELLLFLAARAQHIEELIQPALKAGKIVLCDRFNDSTIAYQGAARGLNAKKIQEFCQLVCAEILPNWTLFLDVSPEIGLARTQKIQKVHAQMGQLDRIESEKIEFHERVRQAFLSLVQQEPQRIYRIDANESQSKVLQKALEFLEEQWSDSELKT.

15-22 (GGEGSGKS) contacts ATP.

The protein belongs to the thymidylate kinase family.

It carries out the reaction dTMP + ATP = dTDP + ADP. In terms of biological role, phosphorylation of dTMP to form dTDP in both de novo and salvage pathways of dTTP synthesis. The polypeptide is Thymidylate kinase (Protochlamydia amoebophila (strain UWE25)).